A 524-amino-acid chain; its full sequence is Bifunctional purine biosynthesis protein PurH (524 aa).

Residues 1–145 form the MGS-like domain; sequence MIKQALLSVS…KNHRDVTVIV (145 aa).

Belongs to the PurH family.

The catalysed reaction is (6R)-10-formyltetrahydrofolate + 5-amino-1-(5-phospho-beta-D-ribosyl)imidazole-4-carboxamide = 5-formamido-1-(5-phospho-D-ribosyl)imidazole-4-carboxamide + (6S)-5,6,7,8-tetrahydrofolate. It catalyses the reaction IMP + H2O = 5-formamido-1-(5-phospho-D-ribosyl)imidazole-4-carboxamide. It functions in the pathway purine metabolism; IMP biosynthesis via de novo pathway; 5-formamido-1-(5-phospho-D-ribosyl)imidazole-4-carboxamide from 5-amino-1-(5-phospho-D-ribosyl)imidazole-4-carboxamide (10-formyl THF route): step 1/1. The protein operates within purine metabolism; IMP biosynthesis via de novo pathway; IMP from 5-formamido-1-(5-phospho-D-ribosyl)imidazole-4-carboxamide: step 1/1. This Cupriavidus metallidurans (strain ATCC 43123 / DSM 2839 / NBRC 102507 / CH34) (Ralstonia metallidurans) protein is Bifunctional purine biosynthesis protein PurH.